Here is a 367-residue protein sequence, read N- to C-terminus: Mannan endo-1,4-beta-mannosidase (367 aa).

The first 17 residues, 1–17 (MLLTALAVLFASTGCQA), serve as a signal peptide directing secretion. Residues Trp79 and Asn176 each contribute to the substrate site. Catalysis depends on Glu177, which acts as the Proton donor. Cys192 and Cys259 are oxidised to a cystine. 3 residues coordinate substrate: Trp205, Trp240, and Tyr279. The active-site Nucleophile is Glu308. Trp337 lines the substrate pocket.

As to quaternary structure, monomer. Post-translationally, the disulfide bond between Cys-192 and Cys-259 has not been observed in X-ray crystallography. This may be a consequence of the X-ray radiation.

It carries out the reaction Random hydrolysis of (1-&gt;4)-beta-D-mannosidic linkages in mannans, galactomannans and glucomannans.. Functionally, hydrolyzes 1,4-beta linked polysaccharide backbones of mannans. Hydrolyzes mannohexaose (M6) preferentially to mannotriose (M4) and less preferentially to mannotetraose (M3), mannopentaose (M5), and mannobiose (M2); hydrolyzes M5 preferentially to M2, and M3, and less preferentially to mannotetraose M4; hydrolyzes M4 preferentially to M3, and less preferentially to mannose (M1), plus very little M2. Does not hydrolyze mannobiose or mannotriose. Does not hydrolyze xlyan, starch, cellulose or galactose. The sequence is that of Mannan endo-1,4-beta-mannosidase from Mytilus edulis (Blue mussel).